The chain runs to 229 residues: 5'-methylthioadenosine/S-adenosylhomocysteine nucleosidase (229 aa).

Residue Glu12 is the Proton acceptor of the active site. Residues Gly78, Ile152, and 173–174 (ME) contribute to the substrate site. Catalysis depends on Asp197, which acts as the Proton donor.

Belongs to the PNP/UDP phosphorylase family. MtnN subfamily.

The enzyme catalyses S-adenosyl-L-homocysteine + H2O = S-(5-deoxy-D-ribos-5-yl)-L-homocysteine + adenine. It carries out the reaction S-methyl-5'-thioadenosine + H2O = 5-(methylsulfanyl)-D-ribose + adenine. It catalyses the reaction 5'-deoxyadenosine + H2O = 5-deoxy-D-ribose + adenine. It functions in the pathway amino-acid biosynthesis; L-methionine biosynthesis via salvage pathway; S-methyl-5-thio-alpha-D-ribose 1-phosphate from S-methyl-5'-thioadenosine (hydrolase route): step 1/2. Functionally, catalyzes the irreversible cleavage of the glycosidic bond in both 5'-methylthioadenosine (MTA) and S-adenosylhomocysteine (SAH/AdoHcy) to adenine and the corresponding thioribose, 5'-methylthioribose and S-ribosylhomocysteine, respectively. Also cleaves 5'-deoxyadenosine, a toxic by-product of radical S-adenosylmethionine (SAM) enzymes, into 5-deoxyribose and adenine. The sequence is that of 5'-methylthioadenosine/S-adenosylhomocysteine nucleosidase from Haemophilus influenzae (strain PittGG).